A 388-amino-acid chain; its full sequence is P2X purinoceptor 4 (388 aa).

Residues 1 to 33 (MTGCCTVLGAFLFEYDTPRIVLIRSRKVGLMNR) lie on the Cytoplasmic side of the membrane. A helical transmembrane segment spans residues 34–54 (TVQLLILAYVIGWVFVWEKGY). Residues 55 to 338 (QETDSVVSSV…KFDIIPTMIN (284 aa)) lie on the Extracellular side of the membrane. Lys-67 and Lys-69 together coordinate ATP. Residues Lys-67 and Lys-69 each coordinate CTP. N-linked (GlcNAc...) asparagine glycans are attached at residues Asn-75, Asn-110, Asn-131, Asn-153, and Asn-184. 3 cysteine pairs are disulfide-bonded: Cys-116/Cys-165, Cys-126/Cys-149, and Cys-132/Cys-159. Residues Thr-186 and Leu-188 each contribute to the ATP site. Thr-186 is a CTP binding site. Asn-199 and Asn-208 each carry an N-linked (GlcNAc...) asparagine glycan. 2 disulfide bridges follow: Cys-217–Cys-227 and Cys-261–Cys-270. ATP-binding residues include Asn-293, Arg-295, and Lys-313. CTP contacts are provided by Asn-293, Arg-295, and Lys-313. Residues 339–359 (IGSGLALLGVATVLCDVIVLY) form a helical membrane-spanning segment. Residues 360–388 (CMKKRYYYREKKYKYVEDYEQGLGNQMEQ) lie on the Cytoplasmic side of the membrane.

Belongs to the P2X receptor family. In terms of assembly, functional P2RXs are organized as homomeric and heteromeric trimers. Forms heterotrimer with P2RX1. Interacts with P2RX7 (via C-terminus); this interaction is functional only in the presence of ATP. Forms heterotrimer with P2RX4; functional differences between homomeric P2RX4 and P2RX4/6 heterotrimer are minor. Interacts with AP1M2.

Its subcellular location is the cell membrane. It is found in the lysosome membrane. The enzyme catalyses K(+)(in) = K(+)(out). It carries out the reaction Na(+)(in) = Na(+)(out). The catalysed reaction is Ca(2+)(in) = Ca(2+)(out). Its activity is regulated as follows. Activated by ATP. pH-dependent and inhibited by acidic pH. Functionally, ATP-gated nonselective transmembrane cation channel permeable to potassium, sodium and calcium. CTP, but not GTP or UTP, functions as a weak affinity agonist for P2RX4. Activated by extracellularly released ATP, it plays multiple role in immunity and central nervous system physiology. Could also function as an ATP-gated cation channel of lysosomal membranes. In Bos taurus (Bovine), this protein is P2X purinoceptor 4 (P2RX4).